The sequence spans 1070 residues: DNA-directed RNA polymerase subunit beta (1070 aa).

The protein belongs to the RNA polymerase beta chain family. In terms of assembly, in plastids the minimal PEP RNA polymerase catalytic core is composed of four subunits: alpha, beta, beta', and beta''. When a (nuclear-encoded) sigma factor is associated with the core the holoenzyme is formed, which can initiate transcription.

It localises to the plastid. Its subcellular location is the chloroplast. It catalyses the reaction RNA(n) + a ribonucleoside 5'-triphosphate = RNA(n+1) + diphosphate. Its function is as follows. DNA-dependent RNA polymerase catalyzes the transcription of DNA into RNA using the four ribonucleoside triphosphates as substrates. The polypeptide is DNA-directed RNA polymerase subunit beta (Silene latifolia (White campion)).